We begin with the raw amino-acid sequence, 233 residues long: Homeobox protein EMX1 (233 aa).

The homeobox DNA-binding region spans 135 to 194; the sequence is PKRIRTAFSPSQLLRLERAFEKNHYVVGAERKQLASSLSLSETQVKVWFQNRRTKYKRQK. Residues 192 to 233 form a disordered region; it reads RQKLEEEGPDSDQKKKGSHHINRWRLATKQPNGEDIDVTSND. Residues 193–206 show a composition bias toward basic and acidic residues; that stretch reads QKLEEEGPDSDQKK.

It belongs to the EMX homeobox family.

The protein localises to the nucleus. In terms of biological role, may function in combinations with OTX1/2 to specify cell fates in the developing central nervous system. The sequence is that of Homeobox protein EMX1 (emx1) from Xenopus tropicalis (Western clawed frog).